The primary structure comprises 412 residues: Cysteine desulfurase (412 aa).

At lysine 231 the chain carries N6-(pyridoxal phosphate)lysine. Cysteine 369 serves as the catalytic Cysteine persulfide intermediate.

The protein belongs to the class-V pyridoxal-phosphate-dependent aminotransferase family. Csd subfamily. Homodimer. Interacts with SufE and the SufBCD complex composed of SufB, SufC and SufD. The interaction with SufE is required to mediate the direct transfer of the sulfur atom from the S-sulfanylcysteine. Requires pyridoxal 5'-phosphate as cofactor.

The protein localises to the cytoplasm. The enzyme catalyses (sulfur carrier)-H + L-cysteine = (sulfur carrier)-SH + L-alanine. It carries out the reaction L-selenocysteine + AH2 = hydrogenselenide + L-alanine + A + H(+). It participates in cofactor biosynthesis; iron-sulfur cluster biosynthesis. In terms of biological role, cysteine desulfurases mobilize the sulfur from L-cysteine to yield L-alanine, an essential step in sulfur metabolism for biosynthesis of a variety of sulfur-containing biomolecules. Component of the suf operon, which is activated and required under specific conditions such as oxidative stress and iron limitation. Acts as a potent selenocysteine lyase in vitro, that mobilizes selenium from L-selenocysteine. Selenocysteine lyase activity is however unsure in vivo. The protein is Cysteine desulfurase (sufS) of Dickeya dadantii (strain 3937) (Erwinia chrysanthemi (strain 3937)).